Here is a 403-residue protein sequence, read N- to C-terminus: Argininosuccinate synthase (403 aa).

ATP-binding positions include 13–21 and Ala40; that span reads AYSGGLDTS. L-citrulline is bound by residues Tyr92 and Ser97. Residue Gly122 participates in ATP binding. Residues Thr124, Asn128, and Asp129 each contribute to the L-aspartate site. Asn128 contacts L-citrulline. L-citrulline-binding residues include Arg132, Ser181, Ser190, Glu266, and Tyr278.

Belongs to the argininosuccinate synthase family. Type 1 subfamily. Homotetramer.

It is found in the cytoplasm. It carries out the reaction L-citrulline + L-aspartate + ATP = 2-(N(omega)-L-arginino)succinate + AMP + diphosphate + H(+). It functions in the pathway amino-acid biosynthesis; L-arginine biosynthesis; L-arginine from L-ornithine and carbamoyl phosphate: step 2/3. This Aliivibrio fischeri (strain MJ11) (Vibrio fischeri) protein is Argininosuccinate synthase.